We begin with the raw amino-acid sequence, 482 residues long: PAN domain-containing protein At5g03700 (482 aa).

Positions 1–31 are cleaved as a signal peptide; it reads MEGLCLNSFTRVLLLLFVFLVFSHKWQRVNA. Positions 330 to 411 constitute a PAN domain; sequence CDKTTEFKVV…SKLGYFKVRE (82 aa). 2 disulfides stabilise this stretch: C363–C385 and C367–C373. The chain crosses the membrane as a helical span at residues 425–445; sequence GMSLLAVIALVLMVAMVYVGF.

It is found in the membrane. The protein is PAN domain-containing protein At5g03700 of Arabidopsis thaliana (Mouse-ear cress).